Here is a 283-residue protein sequence, read N- to C-terminus: Pantothenate synthetase (283 aa).

30–37 is a binding site for ATP; that stretch reads MGNLHDGH. Residue His37 is the Proton donor of the active site. Position 61 (Gln61) interacts with (R)-pantoate. Gln61 is a binding site for beta-alanine. 149–152 is a binding site for ATP; that stretch reads GEKD. Gln155 provides a ligand contact to (R)-pantoate. ATP is bound by residues Met178 and 186–189; that span reads LSSR.

This sequence belongs to the pantothenate synthetase family. As to quaternary structure, homodimer.

It is found in the cytoplasm. The enzyme catalyses (R)-pantoate + beta-alanine + ATP = (R)-pantothenate + AMP + diphosphate + H(+). It participates in cofactor biosynthesis; (R)-pantothenate biosynthesis; (R)-pantothenate from (R)-pantoate and beta-alanine: step 1/1. Its activity is regulated as follows. Activation requires a combination of a divalent cation, magnesium or manganese, and a monovalent cation, potassium or ammonium. Above the optimum concentration for activation, magnesium and manganese are rather inhibitory. Also activated by 2-mercaptoethanol, dithiothreitol, cysteine and glutathione. Inhibited by divalent cations (mercury, cobalt, zinc, copper, silver), chelating agents (EDTA, EGTA and o-phenanthroline), and analogs of beta-alanine (taurine, gamma-aminobutyrate, gamma-amino-beta-hydroxybutyrate). Functionally, catalyzes the condensation of pantoate with beta-alanine in an ATP-dependent reaction via a pantoyl-adenylate intermediate. This chain is Pantothenate synthetase (panC), found in Escherichia coli (strain K12).